We begin with the raw amino-acid sequence, 122 residues long: Large ribosomal subunit protein uL14 (122 aa).

This sequence belongs to the universal ribosomal protein uL14 family. As to quaternary structure, part of the 50S ribosomal subunit. Forms a cluster with proteins L3 and L19. In the 70S ribosome, L14 and L19 interact and together make contacts with the 16S rRNA in bridges B5 and B8.

Functionally, binds to 23S rRNA. Forms part of two intersubunit bridges in the 70S ribosome. This chain is Large ribosomal subunit protein uL14, found in Nitrosococcus oceani (strain ATCC 19707 / BCRC 17464 / JCM 30415 / NCIMB 11848 / C-107).